The following is a 466-amino-acid chain: Phosphomethylpyrimidine synthase (466 aa).

Substrate is bound by residues N80, M109, Y139, H175, 195–197 (SRG), 236–239 (DSLR), and E275. A Zn(2+)-binding site is contributed by H279. Residue Y302 coordinates substrate. H343 provides a ligand contact to Zn(2+). C423, C426, and C431 together coordinate [4Fe-4S] cluster.

It belongs to the ThiC family. Requires [4Fe-4S] cluster as cofactor.

The enzyme catalyses 5-amino-1-(5-phospho-beta-D-ribosyl)imidazole + S-adenosyl-L-methionine = 4-amino-2-methyl-5-(phosphooxymethyl)pyrimidine + CO + 5'-deoxyadenosine + formate + L-methionine + 3 H(+). Its pathway is cofactor biosynthesis; thiamine diphosphate biosynthesis. Functionally, catalyzes the synthesis of the hydroxymethylpyrimidine phosphate (HMP-P) moiety of thiamine from aminoimidazole ribotide (AIR) in a radical S-adenosyl-L-methionine (SAM)-dependent reaction. The protein is Phosphomethylpyrimidine synthase of Synechococcus sp. (strain CC9902).